Reading from the N-terminus, the 640-residue chain is Threonine--tRNA ligase (640 aa).

Residues 1 to 61 (MVKITYPDNS…MQDSTIKLIT (61 aa)) form the TGS domain. The tract at residues 242–533 (DHRKLGPKLN…LIENFAGEFP (292 aa)) is catalytic. Cysteine 334, histidine 385, and histidine 510 together coordinate Zn(2+).

It belongs to the class-II aminoacyl-tRNA synthetase family. As to quaternary structure, homodimer. It depends on Zn(2+) as a cofactor.

It localises to the cytoplasm. The enzyme catalyses tRNA(Thr) + L-threonine + ATP = L-threonyl-tRNA(Thr) + AMP + diphosphate + H(+). Its function is as follows. Catalyzes the attachment of threonine to tRNA(Thr) in a two-step reaction: L-threonine is first activated by ATP to form Thr-AMP and then transferred to the acceptor end of tRNA(Thr). Also edits incorrectly charged L-seryl-tRNA(Thr). The chain is Threonine--tRNA ligase from Petrotoga mobilis (strain DSM 10674 / SJ95).